A 384-amino-acid chain; its full sequence is Interstitial collagenase (384 aa).

Positions 1 to 25 are cleaved as a signal peptide; the sequence is MLSGLWSSILALLGVFLQSVGEFRA. A propeptide spans 26 to 88 (activation peptide); sequence ETQEQDVEIV…STCGVPDVGE (63 aa). The short motif at 79–86 is the Cysteine switch element; the sequence is STCGVPDV. C81 contributes to the Zn(2+) binding site. Ca(2+)-binding residues include D113 and D129. H139 and D141 together coordinate Zn(2+). D146, G147, G149, and N151 together coordinate Ca(2+). H154 is a Zn(2+) binding site. Residues G161, G163, and D165 each contribute to the Ca(2+) site. Position 167 (H167) interacts with Zn(2+). Residues D169, E170, and E172 each coordinate Ca(2+). Position 189 (H189) interacts with Zn(2+). The active site involves E190. Zn(2+) is bound by residues H193 and H199. The segment at 218-239 is disordered; the sequence is LSQDDIDGPSGNPVQPRGPQTP. An intrachain disulfide couples C242 to C381. Positions 249, 277, and 347 each coordinate Ca(2+). Hemopexin repeat units follow at residues 273 to 319 and 333 to 381; these read ELGL…FGFP and KQSM…WFNC.

Belongs to the peptidase M10A family. It depends on Ca(2+) as a cofactor. Zn(2+) is required as a cofactor.

It localises to the secreted. The protein resides in the extracellular space. The protein localises to the extracellular matrix. It carries out the reaction Cleavage of the triple helix of collagen at about three-quarters of the length of the molecule from the N-terminus, at 775-Gly-|-Ile-776 in the alpha1(I) chain. Cleaves synthetic substrates and alpha-macroglobulins at bonds where P1' is a hydrophobic residue.. Its activity is regulated as follows. Can be activated without removal of the activation peptide. Its function is as follows. Cleaves collagens of types I, II, and III at one site in the helical domain. Also cleaves collagens of types VII and X. This Aquarana catesbeiana (American bullfrog) protein is Interstitial collagenase.